Here is a 193-residue protein sequence, read N- to C-terminus: NAD(P)H-quinone oxidoreductase subunit I (193 aa).

4Fe-4S ferredoxin-type domains follow at residues 55 to 84 (GRIHFEFDKCISCEVCVRVCPINLPVVDWE) and 95 to 124 (KHYSIDFGVCIFCANCVEYCPTNCLSVTEE). [4Fe-4S] cluster contacts are provided by C64, C67, C70, C74, C104, C107, C110, and C114.

This sequence belongs to the complex I 23 kDa subunit family. As to quaternary structure, NDH-1 is composed of at least 11 different subunits. The cofactor is [4Fe-4S] cluster.

The protein localises to the cellular thylakoid membrane. It catalyses the reaction a plastoquinone + NADH + (n+1) H(+)(in) = a plastoquinol + NAD(+) + n H(+)(out). The enzyme catalyses a plastoquinone + NADPH + (n+1) H(+)(in) = a plastoquinol + NADP(+) + n H(+)(out). Functionally, NDH-1 shuttles electrons from an unknown electron donor, via FMN and iron-sulfur (Fe-S) centers, to quinones in the respiratory and/or the photosynthetic chain. The immediate electron acceptor for the enzyme in this species is believed to be plastoquinone. Couples the redox reaction to proton translocation, and thus conserves the redox energy in a proton gradient. This is NAD(P)H-quinone oxidoreductase subunit I from Cyanothece sp. (strain PCC 7425 / ATCC 29141).